Reading from the N-terminus, the 69-residue chain is Small, acid-soluble spore protein I (69 aa).

Belongs to the SspI family.

The protein localises to the spore core. The polypeptide is Small, acid-soluble spore protein I (Bacillus cereus (strain G9842)).